We begin with the raw amino-acid sequence, 394 residues long: Probable acetyl-CoA acyltransferase (394 aa).

Cys88 functions as the Acyl-thioester intermediate in the catalytic mechanism. Residues His349 and Cys378 each act as proton acceptor in the active site.

The protein belongs to the thiolase-like superfamily. Thiolase family.

The protein localises to the cytoplasm. It catalyses the reaction 2 acetyl-CoA = acetoacetyl-CoA + CoA. The protein is Probable acetyl-CoA acyltransferase of Staphylococcus epidermidis (strain ATCC 35984 / DSM 28319 / BCRC 17069 / CCUG 31568 / BM 3577 / RP62A).